The primary structure comprises 203 residues: Proline-rich protein 1 (203 aa).

The N-terminal stretch at 1-20 (MMKLGLYLTLLFLSVWTVSG) is a signal peptide.

As to expression, component of the acid-insoluble and acid-soluble organic matrix of calcified layers of the shell (at protein level).

It is found in the secreted. This chain is Proline-rich protein 1, found in Lottia gigantea (Giant owl limpet).